A 201-amino-acid polypeptide reads, in one-letter code: dITP/XTP pyrophosphatase (201 aa).

8–13 (TTNENK) contributes to the substrate binding site. D68 functions as the Proton acceptor in the catalytic mechanism. D68 contacts Mg(2+). Substrate-binding positions include S69, 155-158 (FGYD), K177, and 182-183 (HR).

This sequence belongs to the HAM1 NTPase family. Homodimer. Requires Mg(2+) as cofactor.

It catalyses the reaction XTP + H2O = XMP + diphosphate + H(+). The enzyme catalyses dITP + H2O = dIMP + diphosphate + H(+). The catalysed reaction is ITP + H2O = IMP + diphosphate + H(+). In terms of biological role, pyrophosphatase that catalyzes the hydrolysis of nucleoside triphosphates to their monophosphate derivatives, with a high preference for the non-canonical purine nucleotides XTP (xanthosine triphosphate), dITP (deoxyinosine triphosphate) and ITP. Seems to function as a house-cleaning enzyme that removes non-canonical purine nucleotides from the nucleotide pool, thus preventing their incorporation into DNA/RNA and avoiding chromosomal lesions. This is dITP/XTP pyrophosphatase from Borreliella burgdorferi (strain ATCC 35210 / DSM 4680 / CIP 102532 / B31) (Borrelia burgdorferi).